The sequence spans 359 residues: N6-succino-2-amino-2'-deoxyadenylate synthase (359 aa).

Catalysis depends on Ser23, which acts as the Proton acceptor. ATP is bound by residues Ser23, Thr24, Gly25, Lys26, and Gly27. Position 23 (Ser23) interacts with dGMP. Ser23 contacts Mg(2+). Asn49 is a binding site for dGMP. Residues Gly51, His52, and Thr53 each contribute to the ATP site. Gly51 lines the Mg(2+) pocket. DGMP contacts are provided by Ser131, Thr132, and Arg146. Gln190 is a binding site for ATP. DGMP is bound at residue Thr205. A Mg(2+)-binding site is contributed by Thr274. Residues Thr274, Val275, and Arg280 each coordinate L-aspartate. Asn305 and Gln308 together coordinate ATP.

The protein belongs to the Caudovirales PurZ family. It depends on Mg(2+) as a cofactor.

The enzyme catalyses dGMP + L-aspartate + ATP = (2S)-2-amino-2'-deoxyadenylo-succinate + ADP + phosphate + 2 H(+). It participates in purine metabolism. In terms of biological role, involved in the synthesis of the atypical nucleotide dZTP (2-amino-2'-deoxyadenosine-5'-triphosphate). Catalyzes the condensation of aspartate with deoxyguanylate into dSMP (N6-succino-2-amino-2'-deoxyadenylate), which undergoes defumarylation and phosphorylation respectively by host PurB and guanylate/nucleoside diphosphate kinases to give dZTP. dZTP is integrated into the viral genome instead of adenine by the viral DNA polymerase. This Z-base probably completely replaces adenosine and forms a triple bond to the opposite T-base. The resulting non-standard viral DNA is called Z-genome. The chemically modified DNA is probably harder for the host bacteria to digest with nucleases or restriction enzymes. The sequence is that of N6-succino-2-amino-2'-deoxyadenylate synthase from Cyanophage S-2L (Cyanobacteria phage S-2L).